The sequence spans 138 residues: Cysteine desulfuration protein SufE (138 aa).

The Cysteine persulfide intermediate role is filled by cysteine 51.

The protein belongs to the SufE family. As to quaternary structure, homodimer. Interacts with SufS.

The protein localises to the cytoplasm. Its pathway is cofactor biosynthesis; iron-sulfur cluster biosynthesis. Its function is as follows. Participates in cysteine desulfuration mediated by SufS. Cysteine desulfuration mobilizes sulfur from L-cysteine to yield L-alanine and constitutes an essential step in sulfur metabolism for biosynthesis of a variety of sulfur-containing biomolecules. Functions as a sulfur acceptor for SufS, by mediating the direct transfer of the sulfur atom from the S-sulfanylcysteine of SufS, an intermediate product of cysteine desulfuration process. The chain is Cysteine desulfuration protein SufE from Shigella boydii serotype 18 (strain CDC 3083-94 / BS512).